The primary structure comprises 712 residues: Polyribonucleotide nucleotidyltransferase (712 aa).

Asp487 and Asp493 together coordinate Mg(2+). The 60-residue stretch at 554-613 (PRIHTMKISVEKIKDVIGKGGAVIRQLTEETGTTIEIEDDGTIKIAATDGDQAKEAIRRI) folds into the KH domain. The region spanning 623–691 (GVIYTGKVAR…RQGRVRLSMK (69 aa)) is the S1 motif domain.

The protein belongs to the polyribonucleotide nucleotidyltransferase family. Component of the RNA degradosome, which is a multiprotein complex involved in RNA processing and mRNA degradation. The cofactor is Mg(2+).

Its subcellular location is the cytoplasm. It catalyses the reaction RNA(n+1) + phosphate = RNA(n) + a ribonucleoside 5'-diphosphate. Functionally, involved in mRNA degradation. Catalyzes the phosphorolysis of single-stranded polyribonucleotides processively in the 3'- to 5'-direction. In Vibrio cholerae serotype O1 (strain ATCC 39541 / Classical Ogawa 395 / O395), this protein is Polyribonucleotide nucleotidyltransferase.